Consider the following 126-residue polypeptide: Glycine cleavage system H protein (126 aa).

One can recognise a Lipoyl-binding domain in the interval 21-103; sequence TVTIGISEHA…YDGGWIVKVK (83 aa). An N6-lipoyllysine modification is found at Lys-62.

The protein belongs to the GcvH family. As to quaternary structure, the glycine cleavage system is composed of four proteins: P, T, L and H. (R)-lipoate serves as cofactor.

Its function is as follows. The glycine cleavage system catalyzes the degradation of glycine. The H protein shuttles the methylamine group of glycine from the P protein to the T protein. This chain is Glycine cleavage system H protein, found in Vibrio cholerae serotype O1 (strain ATCC 39541 / Classical Ogawa 395 / O395).